The following is a 369-amino-acid chain: Flagellar P-ring protein (369 aa).

The signal sequence occupies residues 1–24 (MSKTISLLKFIICILISLCSFTYA).

It belongs to the FlgI family. The basal body constitutes a major portion of the flagellar organelle and consists of four rings (L,P,S, and M) mounted on a central rod.

It localises to the bacterial flagellum basal body. Its function is as follows. Assembles around the rod to form the L-ring and probably protects the motor/basal body from shearing forces during rotation. The sequence is that of Flagellar P-ring protein from Buchnera aphidicola subsp. Schizaphis graminum (strain Sg).